A 221-amino-acid chain; its full sequence is Coiled-coil domain-containing protein 70 (221 aa).

Residues Asn-129–Glu-168 adopt a coiled-coil conformation.

This is Coiled-coil domain-containing protein 70 (CCDC70) from Macaca fascicularis (Crab-eating macaque).